The primary structure comprises 215 residues: Pyridoxine/pyridoxamine 5'-phosphate oxidase (215 aa).

Residues 9–12 (RRDY) and Lys-69 contribute to the substrate site. FMN is bound by residues 64-69 (RVLLLK), 79-80 (FT), Lys-86, and Gln-108. The substrate site is built by Tyr-126, Arg-130, and Ser-134. Residues 143–144 (QS) and Trp-188 contribute to the FMN site. 194 to 196 (RLH) lines the substrate pocket. Arg-198 lines the FMN pocket.

Belongs to the pyridoxamine 5'-phosphate oxidase family. As to quaternary structure, homodimer. FMN is required as a cofactor.

It catalyses the reaction pyridoxamine 5'-phosphate + O2 + H2O = pyridoxal 5'-phosphate + H2O2 + NH4(+). The catalysed reaction is pyridoxine 5'-phosphate + O2 = pyridoxal 5'-phosphate + H2O2. Its pathway is cofactor metabolism; pyridoxal 5'-phosphate salvage; pyridoxal 5'-phosphate from pyridoxamine 5'-phosphate: step 1/1. The protein operates within cofactor metabolism; pyridoxal 5'-phosphate salvage; pyridoxal 5'-phosphate from pyridoxine 5'-phosphate: step 1/1. In terms of biological role, catalyzes the oxidation of either pyridoxine 5'-phosphate (PNP) or pyridoxamine 5'-phosphate (PMP) into pyridoxal 5'-phosphate (PLP). The sequence is that of Pyridoxine/pyridoxamine 5'-phosphate oxidase from Pseudomonas syringae pv. tomato (strain ATCC BAA-871 / DC3000).